A 109-amino-acid polypeptide reads, in one-letter code: Large ribosomal subunit protein P1 (109 aa).

Residues 71–109 (APAAASSAPAKKEEPKKEEPKKEEPKEEETDMDMGDLFG) form a disordered region. Residues 80-95 (AKKEEPKKEEPKKEEP) are compositionally biased toward basic and acidic residues. Repeat copies occupy residues 81-85 (KKEEP), 86-90 (KKEEP), and 91-95 (KKEEP). The interval 81 to 95 (KKEEPKKEEPKKEEP) is 3 X 5 AA tandem repeats of K-K-E-E-P. Residues 96–109 (KEEETDMDMGDLFG) are compositionally biased toward acidic residues.

Belongs to the eukaryotic ribosomal protein P1/P2 family. Post-translationally, not phosphorylated.

The protein is Large ribosomal subunit protein P1 (RPLP1) of Tetrahymena thermophila.